The chain runs to 110 residues: MSISQSDASLAAVPAVDQFDPSSGASGGYDTPLGITNPPIDELLDRVSSKYALVIYAAKRARQINDYYNQLGEGILEYVGPLVEPGLQEKPLSIALREIHADLLEHTEGE.

Belongs to the RNA polymerase subunit omega family. As to quaternary structure, the RNAP catalytic core consists of 2 alpha, 1 beta, 1 beta' and 1 omega subunit. When a sigma factor is associated with the core the holoenzyme is formed, which can initiate transcription.

The enzyme catalyses RNA(n) + a ribonucleoside 5'-triphosphate = RNA(n+1) + diphosphate. In terms of biological role, promotes RNA polymerase assembly. Latches the N- and C-terminal regions of the beta' subunit thereby facilitating its interaction with the beta and alpha subunits. The chain is DNA-directed RNA polymerase subunit omega (rpoZ) from Mycobacterium bovis (strain ATCC BAA-935 / AF2122/97).